A 252-amino-acid polypeptide reads, in one-letter code: Orotidine 5'-phosphate decarboxylase (252 aa).

Substrate-binding positions include Asp-24, Lys-46, 73-82 (DLKFHDIPNT), Thr-137, Arg-199, Gln-208, Gly-228, and Arg-229. The active-site Proton donor is Lys-75.

It belongs to the OMP decarboxylase family. Type 1 subfamily. In terms of assembly, homodimer.

It catalyses the reaction orotidine 5'-phosphate + H(+) = UMP + CO2. It participates in pyrimidine metabolism; UMP biosynthesis via de novo pathway; UMP from orotate: step 2/2. In terms of biological role, catalyzes the decarboxylation of orotidine 5'-monophosphate (OMP) to uridine 5'-monophosphate (UMP). In Moorella thermoacetica (strain ATCC 39073 / JCM 9320), this protein is Orotidine 5'-phosphate decarboxylase.